The chain runs to 335 residues: Probable magnesium transporter NIPA1 (335 aa).

Residues 1 to 7 (MDQMSPD) are Extracellular-facing. The chain crosses the membrane as a helical span at residues 8–28 (NINGVILAVSSSIFIGSSFII). Over 29 to 55 (KKKGLKKAGASGVRAGEGGYGYLKEPW) the chain is Cytoplasmic. The helical transmembrane segment at 56–76 (WWAGMITMIVGEVANFAAYAF) threads the bilayer. The Extracellular segment spans residues 77–79 (APA). Residues 80 to 100 (ILVTPLGALSIIFSAVLAHFI) form a helical membrane-spanning segment. At 101-104 (LKEK) the chain is on the cytoplasmic side. Residues 105-125 (LHMFGILGCILCVVGSTTIVL) traverse the membrane as a helical segment. Topologically, residues 126–143 (HAPHEQKIESVKQIWQLA) are extracellular. Residues 144 to 164 (IEPGFLVYSAVIVIVVAILIF) form a helical membrane-spanning segment. At 165 to 179 (YYEPRYGKTHMIVYV) the chain is on the cytoplasmic side. A helical membrane pass occupies residues 180–200 (GICSLMGSLTVMSVKAVAIAI). The Extracellular portion of the chain corresponds to 201–212 (KLTFSGTNQFKY). A helical membrane pass occupies residues 213-233 (FNTWIFILVVATCCILQINYL). Topologically, residues 234–244 (NKALDTFNTAV) are cytoplasmic. Residues 245–265 (ISPVYYVMFTTFTIIASMIMF) traverse the membrane as a helical segment. Topologically, residues 266-272 (KDWASQS) are extracellular. The helical transmembrane segment at 273–293 (GLKIATELCGFVTILSGTFLL) threads the bilayer. Over 294-335 (HKTKDMGNSASGRGSISMPTRDTPVFTNSGSGRSSSSDKVAS) the chain is Cytoplasmic. Residues 303–321 (ASGRGSISMPTRDTPVFTN) show a composition bias toward polar residues. Residues 303 to 335 (ASGRGSISMPTRDTPVFTNSGSGRSSSSDKVAS) form a disordered region. A compositionally biased stretch (low complexity) spans 322-335 (SGSGRSSSSDKVAS).

Belongs to the NIPA (TC 2.A.7) family. In terms of assembly, homodimer.

It localises to the cell membrane. It is found in the early endosome. Functionally, acts as a Mg(2+) transporter. Can also transport other divalent cations such as Fe(2+), Sr(2+), Ba(2+), Mn(2+) and Co(2+) but to a much less extent than Mg(2+). This chain is Probable magnesium transporter NIPA1, found in Arabidopsis thaliana (Mouse-ear cress).